A 160-amino-acid polypeptide reads, in one-letter code: 6,7-dimethyl-8-ribityllumazine synthase (160 aa).

5-amino-6-(D-ribitylamino)uracil is bound by residues Trp26, 59–61 (AVE), and 81–83 (VVI). 86–87 (GT) serves as a coordination point for (2S)-2-hydroxy-3-oxobutyl phosphate. The Proton donor role is filled by His89. Phe114 contacts 5-amino-6-(D-ribitylamino)uracil. Arg128 lines the (2S)-2-hydroxy-3-oxobutyl phosphate pocket.

It belongs to the DMRL synthase family.

It catalyses the reaction (2S)-2-hydroxy-3-oxobutyl phosphate + 5-amino-6-(D-ribitylamino)uracil = 6,7-dimethyl-8-(1-D-ribityl)lumazine + phosphate + 2 H2O + H(+). The protein operates within cofactor biosynthesis; riboflavin biosynthesis; riboflavin from 2-hydroxy-3-oxobutyl phosphate and 5-amino-6-(D-ribitylamino)uracil: step 1/2. Catalyzes the formation of 6,7-dimethyl-8-ribityllumazine by condensation of 5-amino-6-(D-ribitylamino)uracil with 3,4-dihydroxy-2-butanone 4-phosphate. This is the penultimate step in the biosynthesis of riboflavin. This is 6,7-dimethyl-8-ribityllumazine synthase from Frankia casuarinae (strain DSM 45818 / CECT 9043 / HFP020203 / CcI3).